The chain runs to 131 residues: Runt-related transcription factor 2 (131 aa).

Residues 1-10 (MRVGVPPQIP) enclose the Runt domain. The tract at residues 1–75 (MRVGVPPQIP…SSTRGTGLPV (75 aa)) is disordered. Arg-11 is modified (asymmetric dimethylarginine). Composition is skewed to polar residues over residues 13–36 (SLNS…RQAQ) and 43–70 (YDQS…STRG).

In terms of assembly, heterodimer of an alpha and a beta subunit. The alpha subunit binds DNA as a monomer and through the Runt domain. DNA-binding is increased by heterodimerization. Interacts with XRCC6 (Ku70) and XRCC5 (Ku80). Interacts with CCNB1, KAT6A and KAT6B. Interacts with HIVEP3. Interacts with IFI204. Interaction with SATB2; the interaction results in enhanced DNA binding and transactivation by these transcription factors. Binds to HIPK3. Interacts with FOXO1 (via a C-terminal region); the interaction inhibits RUNX2 transcriptional activity towards BGLAP. This interaction is prevented on insulin or IGF1 stimulation as FOXO1 is exported from the nucleus. Interacts with FOXP3. Interacts with TMEM119. Interacts with OLFM2. Interacts with IPO7; the interaction inhibits RUNX2 nuclear translocation in osteoblasts. Phosphorylated; probably by MAP kinases (MAPK). Phosphorylation by HIPK3 is required for the SPEN/MINT and FGF2 transactivation during osteoblastic differentiation.

Its subcellular location is the nucleus. It is found in the cytoplasm. Its function is as follows. Transcription factor involved in osteoblastic differentiation and skeletal morphogenesis. Essential for the maturation of osteoblasts and both intramembranous and endochondral ossification. CBF binds to the core site, 5'-PYGPYGGT-3', of a number of enhancers and promoters, including murine leukemia virus, polyomavirus enhancer, T-cell receptor enhancers, osteocalcin, osteopontin, bone sialoprotein, alpha 1(I) collagen, LCK, IL-3 and GM-CSF promoters. Inhibits KAT6B-dependent transcriptional activation. In osteoblasts, supports transcription activation: synergizes with SPEN/MINT to enhance FGFR2-mediated activation of the osteocalcin FGF-responsive element (OCFRE). This Equus caballus (Horse) protein is Runt-related transcription factor 2 (RUNX2).